A 450-amino-acid chain; its full sequence is Exodeoxyribonuclease 7 large subunit (450 aa).

Belongs to the XseA family. As to quaternary structure, heterooligomer composed of large and small subunits.

Its subcellular location is the cytoplasm. It carries out the reaction Exonucleolytic cleavage in either 5'- to 3'- or 3'- to 5'-direction to yield nucleoside 5'-phosphates.. Its function is as follows. Bidirectionally degrades single-stranded DNA into large acid-insoluble oligonucleotides, which are then degraded further into small acid-soluble oligonucleotides. The polypeptide is Exodeoxyribonuclease 7 large subunit (Listeria welshimeri serovar 6b (strain ATCC 35897 / DSM 20650 / CCUG 15529 / CIP 8149 / NCTC 11857 / SLCC 5334 / V8)).